Consider the following 150-residue polypeptide: 3-dehydroquinate dehydratase (150 aa).

Tyr-26 acts as the Proton acceptor in catalysis. The substrate site is built by Asn-77, His-83, and Asp-90. Residue His-103 is the Proton donor of the active site. Residues 104–105 (LS) and Arg-114 each bind substrate.

This sequence belongs to the type-II 3-dehydroquinase family. In terms of assembly, homododecamer.

It carries out the reaction 3-dehydroquinate = 3-dehydroshikimate + H2O. It participates in metabolic intermediate biosynthesis; chorismate biosynthesis; chorismate from D-erythrose 4-phosphate and phosphoenolpyruvate: step 3/7. Catalyzes a trans-dehydration via an enolate intermediate. The sequence is that of 3-dehydroquinate dehydratase from Yersinia enterocolitica serotype O:8 / biotype 1B (strain NCTC 13174 / 8081).